We begin with the raw amino-acid sequence, 222 residues long: Homing endonuclease I-ApeI (222 aa).

In terms of assembly, probably functions as a monomer. Requires Mg(2+) as cofactor. Mn(2+) serves as cofactor.

Functionally, endonuclease involved in 16S rRNA intron I-alpha homing. Recognizes the minimal target 5'-GCAAGGCTGAAACTTAAAGG-3'; generates 4 base 3' protruding ends 5'-AAAC-3' and 5'-GTTT-3'. This Aeropyrum pernix (strain ATCC 700893 / DSM 11879 / JCM 9820 / NBRC 100138 / K1) protein is Homing endonuclease I-ApeI (apeI).